The primary structure comprises 41 residues: Plantazolicin (41 aa).

The propeptide occupies Met1–Ala27. Arg28 bears the N2,N2-dimethylarginine mark. The segment at residues Arg28–Cys29 is a cross-link (thiazole-4-carboxylic acid (Arg-Cys)). 2 consecutive cross-links (5-methyloxazole-4-carboxylic acid (Cys-Thr)) follow at residues Cys29–Thr30 and Cys31–Thr32. Residues Thr30–Cys31 constitute a cross-link (thiazole-4-carboxylic acid (Thr-Cys)). Residues Thr32 to Thr33 constitute a cross-link (5-methyloxazole-4-carboxylic acid (Thr-Thr)). A cross-link (oxazole-4-carboxylic acid (Ile-Ser)) is located at residues Ile35 to Ser36. Cross-links (oxazole-4-carboxylic acid (Ser-Ser)) lie at residues Ser36–Ser37, Ser37–Ser38, and Ser38–Ser39. Positions Ser39–Thr40 form a cross-link, 5-methyloxazoline-4-carboxylic acid (Ser-Thr).

Post-translationally, maturation of thiazole and oxazole containing antibiotics involves the enzymatic condensation of a Cys, Ser or Thr with the alpha-carbonyl of the preceding amino acid to form a thioether or ether bond, then dehydration to form a double bond with the alpha-amino nitrogen. Thiazoline or oxazoline ring are dehydrogenated to form thiazole or oxazole rings. 2 forms exist: plantazolicin A and plantazolicin B. The structural difference between them is a dimethylation at Arg-28 in plantazolicin A.

Its subcellular location is the secreted. The protein localises to the cell wall. In terms of biological role, peptide antibiotic inhibiting growth of Gram-positive bacteria in the dimethylated form plantazolicin A. The desmethyl form plantazolicin B has no antibiotic activity. The mode of action appears to be disruption of cell walls and lysis of cells. Inhibits B.subtilis strain HB0042, B.megaterium strain 7A1 and B.anthracis (MIC=2-4 ug/ml). Weakly inhibits Gram-positive bacteria B.brevis strain ATCC 8246, B.subtilis strain 168, B.cereus strain ATCC 14579 and strain CU1065, B.licheniformis strain ATCC 9789, M.luteus, B.sphaericus, P.granivorans and S.pyogenes (MIC=128 ug/ml). Does not inhibit B.pumilus, P.polymyxa, Arthrobacter sp., S.aureus, vancomycin-resistant E.faecalis, L.monocytogenes, methicillin-resistant S.aureus or Gram-negative bacteria E.coli strain K12, K.terrigena, Pseudomonas sp. and E.carotovora. In Bacillus velezensis (strain DSM 23117 / BGSC 10A6 / LMG 26770 / FZB42) (Bacillus amyloliquefaciens subsp. plantarum), this protein is Plantazolicin.